The following is a 509-amino-acid chain: Phosphoglycerate kinase, glycosomal (509 aa).

Residues Val-32, Asp-33, Phe-34, Asn-35, Arg-48, Ser-70, His-71, Gly-73, Arg-74, Arg-224, His-260, and Arg-261 each coordinate (2R)-3-phosphoglycerate. Position 306 (Gly-306) interacts with ADP. Gly-306 contributes to the CDP binding site. Residue Lys-308 coordinates (2R)-3-phosphoglycerate. Lys-308 serves as a coordination point for AMP. Asp-311 is a CDP binding site. Asp-311 contacts Mg(2+). Residues Lys-312 and Gly-330 each coordinate ADP. Lys-312 contacts AMP. Lys-312 contacts ATP. Gly-330 lines the CDP pocket. Residues Ala-331 and Ala-403 each contribute to the AMP site. Residues Ala-331 and Ala-403 each contribute to the ATP site. Residues Ala-403 and Asn-427 each coordinate ADP. The CDP site is built by Gly-428 and Phe-433. The ADP site is built by Phe-433, Glu-434, Asp-466, and Ser-467. Residue Glu-434 coordinates AMP. 3 residues coordinate ATP: Glu-434, Asp-466, and Ser-467. Asp-466 serves as a coordination point for Mg(2+).

Belongs to the phosphoglycerate kinase family. As to quaternary structure, monomer. Requires Mg(2+) as cofactor.

It localises to the glycosome. The enzyme catalyses (2R)-3-phosphoglycerate + ATP = (2R)-3-phospho-glyceroyl phosphate + ADP. The protein operates within carbohydrate degradation; glycolysis; pyruvate from D-glyceraldehyde 3-phosphate: step 2/5. The polypeptide is Phosphoglycerate kinase, glycosomal (56PGK) (Trypanosoma congolense).